Here is a 444-residue protein sequence, read N- to C-terminus: Deoxyguanosinetriphosphate triphosphohydrolase-like protein (444 aa).

Positions 66-259 (RLTHSLEAAQ…MELADDIAYG (194 aa)) constitute an HD domain.

Belongs to the dGTPase family. Type 2 subfamily.

In Vibrio campbellii (strain ATCC BAA-1116), this protein is Deoxyguanosinetriphosphate triphosphohydrolase-like protein.